A 317-amino-acid polypeptide reads, in one-letter code: Transaldolase (317 aa).

Residue Lys-126 is the Schiff-base intermediate with substrate of the active site.

The protein belongs to the transaldolase family. Type 1 subfamily. As to quaternary structure, homodimer.

The protein localises to the cytoplasm. The catalysed reaction is D-sedoheptulose 7-phosphate + D-glyceraldehyde 3-phosphate = D-erythrose 4-phosphate + beta-D-fructose 6-phosphate. The protein operates within carbohydrate degradation; pentose phosphate pathway; D-glyceraldehyde 3-phosphate and beta-D-fructose 6-phosphate from D-ribose 5-phosphate and D-xylulose 5-phosphate (non-oxidative stage): step 2/3. Functionally, transaldolase is important for the balance of metabolites in the pentose-phosphate pathway. The protein is Transaldolase of Paraburkholderia phytofirmans (strain DSM 17436 / LMG 22146 / PsJN) (Burkholderia phytofirmans).